The primary structure comprises 414 residues: Esterase FrsA (414 aa).

Belongs to the FrsA family.

It catalyses the reaction a carboxylic ester + H2O = an alcohol + a carboxylate + H(+). Functionally, catalyzes the hydrolysis of esters. This is Esterase FrsA from Salmonella agona (strain SL483).